A 286-amino-acid chain; its full sequence is Deleted in azoospermia-like-B (286 aa).

Positions 33–114 (NTVFVGGIDI…PAIRKICTYV (82 aa)) constitute an RRM domain. Positions 155 to 180 (ACPYPSSPPMAIQQIPVGCQQPGYFQ) constitute a DAZ domain.

Belongs to the RRM DAZ family. As to quaternary structure, interacts with the C-terminus of pabp1 and with epabp. Prior to oocyte maturation, found in a complex with epabp and pum2 proteins and spdy1 mRNA; pum2 dissociates from the complex during maturation.

The protein localises to the cytoplasm. RNA-binding protein that is required for primordial germ cell (PGC) differentiation and indirectly necessary for the migration of PGCs through the endoderm. May promote meiotic cell division during spermatogenesis. Shows a preference for G- and U-rich RNAs and probably binds the 3'-UTR of target mRNAs. Stimulates the initiation of translation of mRNAs through the recruitment of poly(A)-binding proteins (PABPs). The sequence is that of Deleted in azoospermia-like-B (dazl-b) from Xenopus laevis (African clawed frog).